The sequence spans 282 residues: Globin-related protein glb-13 (282 aa).

The segment at 1-46 (MGQENSKCPHQSLAEKRYKVERPKTKKVSSGSATERCLSTQSDEKN) is disordered. A compositionally biased stretch (basic and acidic residues) spans 13–23 (LAEKRYKVERP). Residues 28–41 (VSSGSATERCLSTQ) show a composition bias toward polar residues. The Globin domain occupies 100–249 (FLTRRERILL…IISFMRRGFD (150 aa)). Heme b-binding residues include histidine 162 and histidine 194.

The protein belongs to the globin family.

Functionally, involved in oxidative stress resistance. The sequence is that of Globin-related protein glb-13 from Caenorhabditis elegans.